The following is a 465-amino-acid chain: ATP synthase subunit beta (465 aa).

ATP is bound at residue 153–160; sequence GGAGVGKT.

This sequence belongs to the ATPase alpha/beta chains family. F-type ATPases have 2 components, CF(1) - the catalytic core - and CF(0) - the membrane proton channel. CF(1) has five subunits: alpha(3), beta(3), gamma(1), delta(1), epsilon(1). CF(0) has three main subunits: a(1), b(2) and c(9-12). The alpha and beta chains form an alternating ring which encloses part of the gamma chain. CF(1) is attached to CF(0) by a central stalk formed by the gamma and epsilon chains, while a peripheral stalk is formed by the delta and b chains.

The protein localises to the cell membrane. It carries out the reaction ATP + H2O + 4 H(+)(in) = ADP + phosphate + 5 H(+)(out). Its function is as follows. Produces ATP from ADP in the presence of a proton gradient across the membrane. The catalytic sites are hosted primarily by the beta subunits. The chain is ATP synthase subunit beta from Clostridium perfringens (strain SM101 / Type A).